Consider the following 306-residue polypeptide: MNEIKTADNAKTYCGFIAIVGRPNVGKSTLLNKILGQKISITSRKAQTTRHRIVGIHTDGPYQAVYVDTPGLHIEEKRAINRLMNRAASSAIGDVDLIIFVVDGTHWNEDDEMVLNKLRAAKAPVVLAINKIDNIKNKEEMLPFITELTSKFDFAHVVPISAQGGKNIAELEKIVRESLHEGTHHFPEEYVTDRSQRFMASEIIREKLMRFTGDELPYSVTVEIEQFKLNERGTYEINGLILVEREGQKKMVIGNKGQKIKQIGIEARADMERLFDNKVHLELWVKVKSGWADDERALRSLGYMDE.

The Era-type G domain maps to 13 to 181 (YCGFIAIVGR…EKIVRESLHE (169 aa)). The segment at 21 to 28 (GRPNVGKS) is G1. Residue 21–28 (GRPNVGKS) participates in GTP binding. Residues 47–51 (QTTRH) are G2. The interval 68–71 (DTPG) is G3. Residues 68 to 72 (DTPGL) and 130 to 133 (NKID) contribute to the GTP site. A G4 region spans residues 130–133 (NKID). The G5 stretch occupies residues 160 to 162 (ISA). The 78-residue stretch at 212–289 (TGDELPYSVT…HLELWVKVKS (78 aa)) folds into the KH type-2 domain.

This sequence belongs to the TRAFAC class TrmE-Era-EngA-EngB-Septin-like GTPase superfamily. Era GTPase family. In terms of assembly, monomer.

Its subcellular location is the cytoplasm. The protein resides in the cell inner membrane. In terms of biological role, an essential GTPase that binds both GDP and GTP, with rapid nucleotide exchange. Plays a role in 16S rRNA processing and 30S ribosomal subunit biogenesis and possibly also in cell cycle regulation and energy metabolism. This Pasteurella multocida (strain Pm70) protein is GTPase Era.